A 401-amino-acid polypeptide reads, in one-letter code: MKPVAISLSLLLLVTLLPGSEQRKVDNPDFQPNCLVGGPDIYDPAQSEKVLWFDVNLDLPPRQRFQQIAKAYKKEIHAVFDVLNYFLTIIPGVNAWELIGNMTASALDKGMIMNPYRDEVLGIAEVLDVPLGNLVFLNLFYEMSRFCTSIVAQTEDNKDLYHARNLDFGQLFVWDIAAQSWGLTEALKKVSVNINFFKNGKLLFKGSTLAGHVGVLTAMKPHKFSLSMNAKVQPDIINVAKWYMGAYENTDLQFVMYFDRWLFENCDDFQCAREKIAGVKLLTGAYFILGGANPGEGSVLVRNTTSVQFERKLFDGANDWFLLQTNYDPDKDPLFIDNRRDPGNACMNKLTRANVGMKGIFTVLSSKPNLNKTTVHTVIMSVTKGYFETFIQKCPNPCWAF.

The first 22 residues, 1–22 (MKPVAISLSLLLLVTLLPGSEQ), serve as a signal peptide directing secretion. N-linked (GlcNAc...) asparagine glycosylation is found at Asn101, Asn303, and Asn371.

The protein belongs to the acid ceramidase family.

It catalyses the reaction an N-acyl-sphingoid base + H2O = a sphingoid base + a fatty acid. It carries out the reaction an N-acylsphing-4-enine + H2O = sphing-4-enine + a fatty acid. The enzyme catalyses an N-acyl-15-methylhexadecasphing-4-enine + H2O = 15-methylhexadecasphing-4-enine + a fatty acid. Functionally, catalyzes the hydrolysis of ceramides into sphingoid base and free fatty acid. C.elegans contain specific sphingoid bases, which are unique or different in structure compared to the sphingoid bases found in other animals. Two examples of these distinctive compounds are: 15-methylhexadecasphinganine and 15-methylhexadecasphing-4-enine. This is Probable acid ceramidase from Caenorhabditis elegans.